The sequence spans 114 residues: ATP synthase subunit c (114 aa).

Helical transmembrane passes span 31–51 (AVFY…AAGG) and 88–108 (IETF…TGIF).

The protein belongs to the ATPase C chain family. F-type ATPases have 2 components, F(1) - the catalytic core - and F(0) - the membrane proton channel. F(1) has five subunits: alpha(3), beta(3), gamma(1), delta(1), epsilon(1). F(0) has three main subunits: a(1), b(2) and c(10-14). The alpha and beta chains form an alternating ring which encloses part of the gamma chain. F(1) is attached to F(0) by a central stalk formed by the gamma and epsilon chains, while a peripheral stalk is formed by the delta and b chains.

The protein localises to the cell inner membrane. Functionally, f(1)F(0) ATP synthase produces ATP from ADP in the presence of a proton or sodium gradient. F-type ATPases consist of two structural domains, F(1) containing the extramembraneous catalytic core and F(0) containing the membrane proton channel, linked together by a central stalk and a peripheral stalk. During catalysis, ATP synthesis in the catalytic domain of F(1) is coupled via a rotary mechanism of the central stalk subunits to proton translocation. Its function is as follows. Key component of the F(0) channel; it plays a direct role in translocation across the membrane. A homomeric c-ring of between 10-14 subunits forms the central stalk rotor element with the F(1) delta and epsilon subunits. The sequence is that of ATP synthase subunit c from Sulfurihydrogenibium sp. (strain YO3AOP1).